The primary structure comprises 181 residues: uncharacterized protein (181 aa).

This is an uncharacterized protein from Borreliella burgdorferi (strain ATCC 35210 / DSM 4680 / CIP 102532 / B31) (Borrelia burgdorferi).